Consider the following 375-residue polypeptide: DNA replication and repair protein RecF (375 aa).

30 to 37 (GENAQGKT) contacts ATP.

The protein belongs to the RecF family.

Its subcellular location is the cytoplasm. Its function is as follows. The RecF protein is involved in DNA metabolism; it is required for DNA replication and normal SOS inducibility. RecF binds preferentially to single-stranded, linear DNA. It also seems to bind ATP. This chain is DNA replication and repair protein RecF, found in Latilactobacillus sakei subsp. sakei (strain 23K) (Lactobacillus sakei subsp. sakei).